Consider the following 305-residue polypeptide: Probable GTP 3',8-cyclase (305 aa).

A Radical SAM core domain is found at 6–233 (RHGRPVMSLR…MQDRKKYYID (228 aa)). A GTP-binding site is contributed by arginine 15. [4Fe-4S] cluster-binding residues include cysteine 22 and cysteine 26. Tyrosine 28 provides a ligand contact to S-adenosyl-L-methionine. [4Fe-4S] cluster is bound at residue cysteine 29. Arginine 62 contributes to the GTP binding site. Glycine 66 is an S-adenosyl-L-methionine binding site. Threonine 92 contributes to the GTP binding site. Serine 116 serves as a coordination point for S-adenosyl-L-methionine. Lysine 153 serves as a coordination point for GTP. [4Fe-4S] cluster-binding residues include cysteine 249 and cysteine 252. 254-256 (RLR) contacts GTP. Cysteine 266 is a [4Fe-4S] cluster binding site.

Belongs to the radical SAM superfamily. MoaA family. It depends on [4Fe-4S] cluster as a cofactor.

It catalyses the reaction GTP + AH2 + S-adenosyl-L-methionine = (8S)-3',8-cyclo-7,8-dihydroguanosine 5'-triphosphate + 5'-deoxyadenosine + L-methionine + A + H(+). It participates in cofactor biosynthesis; molybdopterin biosynthesis. Its function is as follows. Catalyzes the cyclization of GTP to (8S)-3',8-cyclo-7,8-dihydroguanosine 5'-triphosphate. The protein is Probable GTP 3',8-cyclase of Methanothermobacter thermautotrophicus (strain ATCC 29096 / DSM 1053 / JCM 10044 / NBRC 100330 / Delta H) (Methanobacterium thermoautotrophicum).